Reading from the N-terminus, the 499-residue chain is Glycerol kinase (499 aa).

Threonine 13 contributes to the ADP binding site. Residues threonine 13, threonine 14, and serine 15 each coordinate ATP. Threonine 13 is a sn-glycerol 3-phosphate binding site. ADP is bound at residue arginine 17. Sn-glycerol 3-phosphate-binding residues include arginine 83, glutamate 84, tyrosine 135, and aspartate 245. 5 residues coordinate glycerol: arginine 83, glutamate 84, tyrosine 135, aspartate 245, and glutamine 246. The ADP site is built by threonine 267 and glycine 310. Residues threonine 267, glycine 310, glutamine 314, and alanine 411 each coordinate ATP. Alanine 411 and asparagine 415 together coordinate ADP.

This sequence belongs to the FGGY kinase family.

It carries out the reaction glycerol + ATP = sn-glycerol 3-phosphate + ADP + H(+). It functions in the pathway polyol metabolism; glycerol degradation via glycerol kinase pathway; sn-glycerol 3-phosphate from glycerol: step 1/1. Its activity is regulated as follows. Inhibited by fructose 1,6-bisphosphate (FBP). In terms of biological role, key enzyme in the regulation of glycerol uptake and metabolism. Catalyzes the phosphorylation of glycerol to yield sn-glycerol 3-phosphate. This Xylella fastidiosa (strain M12) protein is Glycerol kinase.